Here is a 396-residue protein sequence, read N- to C-terminus: Acetate kinase (396 aa).

Position 7 (Asn-7) interacts with Mg(2+). Lys-14 contacts ATP. Residue Arg-88 participates in substrate binding. Asp-145 (proton donor/acceptor) is an active-site residue. Residues 203–207, 278–280, and 326–330 each bind ATP; these read HAGNG, DAR, and GIGEN. Mg(2+) is bound at residue Glu-379.

It belongs to the acetokinase family. Homodimer. Requires Mg(2+) as cofactor. Mn(2+) is required as a cofactor.

The protein localises to the cytoplasm. The catalysed reaction is acetate + ATP = acetyl phosphate + ADP. It functions in the pathway metabolic intermediate biosynthesis; acetyl-CoA biosynthesis; acetyl-CoA from acetate: step 1/2. In terms of biological role, catalyzes the formation of acetyl phosphate from acetate and ATP. Can also catalyze the reverse reaction. This is Acetate kinase from Phytoplasma australiense.